The sequence spans 1313 residues: Mitogen-activated protein kinase kinase kinase 15 (1313 aa).

Positions 1–58 (MESGGGNAPAGALGAASESPQCPPPPGVEGAAGPAEPDGAAEGAAGGSGEGESGGGPR) are disordered. The segment covering 28-43 (VEGAAGPAEPDGAAEG) has biased composition (low complexity). Residues 44 to 57 (AAGGSGEGESGGGP) are compositionally biased toward gly residues. The Protein kinase domain maps to 652-908 (NGERVVLGKG…TAELLREGFL (257 aa)). ATP-binding positions include 658–666 (LGKGTYGIV) and Lys681. Asp773 functions as the Proton acceptor in the catalytic mechanism. The interval 939-958 (EPMATSSSEHGSVSPDSDAQ) is disordered. Polar residues predominate over residues 942-955 (ATSSSEHGSVSPDS). Position 994 is a phosphoserine (Ser994). Residues 1179–1225 (QLGELRQETNRLLEHLVEKEREYQNLLRQTLEQKTQELYHLQLKLKS) are a coiled coil.

Belongs to the protein kinase superfamily. STE Ser/Thr protein kinase family. MAP kinase kinase kinase subfamily. Mg(2+) is required as a cofactor. As to expression, isoform 2 and isoform 3 are widely expressed. Isoform 2 highest levels are observed in fetal brain, and isoform 3 highest levels in pancreas, peripheral blood leukocytes, fetal brain and spleen.

It catalyses the reaction L-seryl-[protein] + ATP = O-phospho-L-seryl-[protein] + ADP + H(+). The enzyme catalyses L-threonyl-[protein] + ATP = O-phospho-L-threonyl-[protein] + ADP + H(+). Contains an N-terminal autoinhibitory domain. Activated by phosphorylation at Thr-812, inhibited by phosphorylation at Ser-924 and Ser-994. Functionally, serine/threonine kinase which acts as a component of the MAP kinase signal transduction pathway. Once activated, acts as an upstream activator of the p38 MAPK signal transduction cascade through the phosphorylation and activation of several MAP kinase kinases. May function in a signal transduction pathway that is activated by various cell stresses and leads to apoptosis. Involved in phosphorylation of WNK4 in response to osmotic stress or hypotonic low-chloride stimulation via the p38 MAPK signal transduction cascade. The sequence is that of Mitogen-activated protein kinase kinase kinase 15 (MAP3K15) from Homo sapiens (Human).